We begin with the raw amino-acid sequence, 99 residues long: Large ribosomal subunit protein uL23 (99 aa).

The protein belongs to the universal ribosomal protein uL23 family. As to quaternary structure, part of the 50S ribosomal subunit. Contacts protein L29, and trigger factor when it is bound to the ribosome.

In terms of biological role, one of the early assembly proteins it binds 23S rRNA. One of the proteins that surrounds the polypeptide exit tunnel on the outside of the ribosome. Forms the main docking site for trigger factor binding to the ribosome. This Francisella tularensis subsp. tularensis (strain SCHU S4 / Schu 4) protein is Large ribosomal subunit protein uL23.